Here is a 556-residue protein sequence, read N- to C-terminus: Hydroxylamine reductase (556 aa).

Residues cysteine 5, cysteine 8, cysteine 17, and cysteine 23 each contribute to the [4Fe-4S] cluster site. 8 residues coordinate hybrid [4Fe-2O-2S] cluster: histidine 249, glutamate 273, cysteine 317, cysteine 409, cysteine 437, cysteine 462, glutamate 497, and lysine 499. Cysteine 409 is subject to Cysteine persulfide.

This sequence belongs to the HCP family. It depends on [4Fe-4S] cluster as a cofactor. Hybrid [4Fe-2O-2S] cluster serves as cofactor.

Its subcellular location is the cytoplasm. The catalysed reaction is A + NH4(+) + H2O = hydroxylamine + AH2 + H(+). In terms of biological role, catalyzes the reduction of hydroxylamine to form NH(3) and H(2)O. This chain is Hydroxylamine reductase, found in Kosmotoga olearia (strain ATCC BAA-1733 / DSM 21960 / TBF 19.5.1).